A 339-amino-acid polypeptide reads, in one-letter code: Agamous-like MADS-box protein AGL86 (339 aa).

An MADS-box domain is found at 1 to 60; it reads MRSKIKLSLIANKTSRRTTFRKRKGGITNKLHELTTLCGVKACAVISSPYENPVVWPSTE. A coiled-coil region spans residues 86-112; that stretch reads TYLQDKITKETKKLESLRRENRESQLR.

In terms of assembly, interacts with AGL61/DIANA and AGL62.

The protein resides in the nucleus. Its function is as follows. Probable transcription factor. This is Agamous-like MADS-box protein AGL86 (AGL86) from Arabidopsis thaliana (Mouse-ear cress).